A 369-amino-acid chain; its full sequence is Phenylalanine--tRNA ligase alpha subunit (369 aa).

E269 contributes to the Mg(2+) binding site.

The protein belongs to the class-II aminoacyl-tRNA synthetase family. Phe-tRNA synthetase alpha subunit type 1 subfamily. Tetramer of two alpha and two beta subunits. The cofactor is Mg(2+).

It localises to the cytoplasm. It carries out the reaction tRNA(Phe) + L-phenylalanine + ATP = L-phenylalanyl-tRNA(Phe) + AMP + diphosphate + H(+). This Brucella anthropi (strain ATCC 49188 / DSM 6882 / CCUG 24695 / JCM 21032 / LMG 3331 / NBRC 15819 / NCTC 12168 / Alc 37) (Ochrobactrum anthropi) protein is Phenylalanine--tRNA ligase alpha subunit.